We begin with the raw amino-acid sequence, 192 residues long: Cytidylate kinase (192 aa).

7 to 15 (GPPGSGKST) lines the ATP pocket.

Belongs to the cytidylate kinase family. Type 2 subfamily.

The protein resides in the cytoplasm. The enzyme catalyses CMP + ATP = CDP + ADP. It catalyses the reaction dCMP + ATP = dCDP + ADP. The chain is Cytidylate kinase from Halorubrum lacusprofundi (strain ATCC 49239 / DSM 5036 / JCM 8891 / ACAM 34).